The primary structure comprises 848 residues: Adenylate cyclase (848 aa).

Positions 1-535 (MYLYIETLKQ…DVSHHFPLRL (535 aa)) are catalytic. The segment at 541-848 (KALYSPCEIR…DAPLLQQYFS (308 aa)) is regulatory. His-609 bears the Phosphohistidine; by CRR mark.

The protein belongs to the adenylyl cyclase class-1 family.

Its subcellular location is the cytoplasm. It catalyses the reaction ATP = 3',5'-cyclic AMP + diphosphate. This chain is Adenylate cyclase (cyaA), found in Escherichia coli O6:H1 (strain CFT073 / ATCC 700928 / UPEC).